We begin with the raw amino-acid sequence, 634 residues long: Endoribonuclease rege-1 (634 aa).

Disordered regions lie at residues 1–33 (MDST…STPH), 90–113 (SHPS…APMI), and 156–223 (KMGL…NPDP). A compositionally biased stretch (basic and acidic residues) spans 97–106 (ESSDPSKIDD). Composition is skewed to low complexity over residues 182–194 (SSAS…SSSS) and 201–217 (SVSI…STPS). Positions 225 to 377 (LRAVVVDGSN…PSGRHGPRIE (153 aa)) constitute an RNase NYN domain. Asp314 provides a ligand contact to Mg(2+). The C3H1-type zinc finger occupies 387–412 (SSNPLVCPYARKCTYGNKCKFYHPER).

It belongs to the ZC3H12 family. Requires Mg(2+) as cofactor. Expressed in the intestinal cells adjacent to the pharynx.

The protein localises to the cytoplasm. Endonuclease which binds to the 3'UTR of target mRNAs and induces degradation of the transcript. Acts together with rle-1 to repress the expression of the transcription factor ets-4 by binding to the conserved ADE (alternate decay element) and RCE (REGE-1 cleavage element) stem loop structure in its 3'UTR, which controls the expression of genes in the IIS and TORC1 pathways, including those involved in lipid metabolism and autophagosome formation. May play a role in the clearance of apoptotic cell corpses. The protein is Endoribonuclease rege-1 of Caenorhabditis elegans.